Reading from the N-terminus, the 90-residue chain is Large ribosomal subunit protein eL37 (90 aa).

Cysteine 19, cysteine 22, cysteine 34, and cysteine 37 together coordinate Zn(2+). The C4-type zinc finger occupies 19 to 37 (CRRCGRQSYHKQKNSCSSC). The span at 21-31 (RCGRQSYHKQK) shows a compositional bias: basic residues. The disordered stretch occupies residues 21 to 59 (RCGRQSYHKQKNSCSSCGYPNPKMRNPGSIKARRRRTIG).

Belongs to the eukaryotic ribosomal protein eL37 family. Zn(2+) is required as a cofactor.

Its function is as follows. Binds to the 23S rRNA. This is Large ribosomal subunit protein eL37 (RPL37) from Encephalitozoon cuniculi (strain GB-M1) (Microsporidian parasite).